The following is a 455-amino-acid chain: Serine--tRNA ligase (455 aa).

Threonine 252–glutamate 254 contributes to the L-serine binding site. ATP-binding positions include arginine 283–glutamate 285 and valine 299. Position 306 (glutamate 306) interacts with L-serine. Residue glutamate 370–serine 373 participates in ATP binding. Threonine 406 contacts L-serine.

The protein belongs to the class-II aminoacyl-tRNA synthetase family. Type-1 seryl-tRNA synthetase subfamily. As to quaternary structure, homodimer. The tRNA molecule binds across the dimer.

The protein resides in the cytoplasm. The enzyme catalyses tRNA(Ser) + L-serine + ATP = L-seryl-tRNA(Ser) + AMP + diphosphate + H(+). The catalysed reaction is tRNA(Sec) + L-serine + ATP = L-seryl-tRNA(Sec) + AMP + diphosphate + H(+). It functions in the pathway aminoacyl-tRNA biosynthesis; selenocysteinyl-tRNA(Sec) biosynthesis; L-seryl-tRNA(Sec) from L-serine and tRNA(Sec): step 1/1. Functionally, catalyzes the attachment of serine to tRNA(Ser). Is also able to aminoacylate tRNA(Sec) with serine, to form the misacylated tRNA L-seryl-tRNA(Sec), which will be further converted into selenocysteinyl-tRNA(Sec). This chain is Serine--tRNA ligase, found in Thermococcus kodakarensis (strain ATCC BAA-918 / JCM 12380 / KOD1) (Pyrococcus kodakaraensis (strain KOD1)).